We begin with the raw amino-acid sequence, 266 residues long: 14-3-3 protein homolog (266 aa).

A disordered region spans residues 154–177 (KQAADQAQESYQKATETAEGHSPA). A compositionally biased stretch (polar residues) spans 158–168 (DQAQESYQKAT).

The protein belongs to the 14-3-3 family.

The polypeptide is 14-3-3 protein homolog (Neospora caninum (Coccidian parasite)).